A 786-amino-acid polypeptide reads, in one-letter code: Probable glutamine--tRNA ligase (786 aa).

Basic and acidic residues predominate over residues aspartate 181–lysine 198. The disordered stretch occupies residues aspartate 181 to glutamate 218. Residues proline 276–histidine 286 carry the 'HIGH' region motif. ATP contacts are provided by residues glutamate 277–asparagine 279 and histidine 283–alanine 289. Positions 309 and 444 each coordinate L-glutamine. ATP-binding positions include threonine 463, arginine 492 to leucine 493, and valine 500 to lysine 502. Positions valine 499 to arginine 503 match the 'KMSKS' region motif.

It belongs to the class-I aminoacyl-tRNA synthetase family.

It carries out the reaction tRNA(Gln) + L-glutamine + ATP = L-glutaminyl-tRNA(Gln) + AMP + diphosphate. In Caenorhabditis elegans, this protein is Probable glutamine--tRNA ligase.